The primary structure comprises 141 residues: Large ribosomal subunit protein uL11 (141 aa).

This sequence belongs to the universal ribosomal protein uL11 family. In terms of assembly, part of the ribosomal stalk of the 50S ribosomal subunit. Interacts with L10 and the large rRNA to form the base of the stalk. L10 forms an elongated spine to which L12 dimers bind in a sequential fashion forming a multimeric L10(L12)X complex. Post-translationally, one or more lysine residues are methylated.

Its function is as follows. Forms part of the ribosomal stalk which helps the ribosome interact with GTP-bound translation factors. In Crocosphaera subtropica (strain ATCC 51142 / BH68) (Cyanothece sp. (strain ATCC 51142)), this protein is Large ribosomal subunit protein uL11.